We begin with the raw amino-acid sequence, 124 residues long: Large ribosomal subunit protein bL12 (124 aa).

It belongs to the bacterial ribosomal protein bL12 family. As to quaternary structure, homodimer. Part of the ribosomal stalk of the 50S ribosomal subunit. Forms a multimeric L10(L12)X complex, where L10 forms an elongated spine to which 2 to 4 L12 dimers bind in a sequential fashion. Binds GTP-bound translation factors.

Its function is as follows. Forms part of the ribosomal stalk which helps the ribosome interact with GTP-bound translation factors. Is thus essential for accurate translation. The chain is Large ribosomal subunit protein bL12 from Akkermansia muciniphila (strain ATCC BAA-835 / DSM 22959 / JCM 33894 / BCRC 81048 / CCUG 64013 / CIP 107961 / Muc).